The chain runs to 297 residues: HTH-type transcriptional regulator ArgP (297 aa).

Residues 4–60 form the HTH lysR-type domain; that stretch reads PDYRTLQALDAVIRERGFERAAQKLCITQSAVSQRIKQLENLFGQPLLVRTVPPRPT. The H-T-H motif DNA-binding region spans 21 to 40; it reads FERAAQKLCITQSAVSQRIK.

Belongs to the LysR transcriptional regulatory family. In terms of assembly, homodimer.

Controls the transcription of genes involved in arginine and lysine metabolism. The protein is HTH-type transcriptional regulator ArgP of Serratia proteamaculans (strain 568).